A 352-amino-acid polypeptide reads, in one-letter code: Lipopolysaccharide core biosynthesis mannosyltransferase LpcC (352 aa).

This sequence belongs to the glycosyltransferase group 1 family. Glycosyltransferase 4 subfamily.

It participates in bacterial outer membrane biogenesis; LPS core biosynthesis. Its function is as follows. Acts at transfer of mannose group to a 3-deoxy-D-mono octulonic acid (KDO) via an alpha-1,5 linkage. The protein is Lipopolysaccharide core biosynthesis mannosyltransferase LpcC (lpcC) of Rhizobium leguminosarum bv. viciae.